The primary structure comprises 468 residues: MGKVKHLWSDVYDVEFSENELPNIGNILSLQDGKCFLMVERILSNTLVRAILIKIGEEQIKINDIAIDTKESFNVPVGSATNGAIFDVLGNLLNEHPGDFKKVEVDSTISTEKHFNSDNEIINTGIKIIDFFVPIIKGSKIGIFGGAGVGKTIIIKELIFNISRQRDSNDVKVFFVGTGERTREAKELYDELVNSSLIKSTSLFISQMNEPSGSRMKILPVGITAAEYARDSEQKDVLFFVDNIYRYLQAGRELSFSLGKKPSEAGYQATLVSDISSVQERLANSKHGSITSFQTVFLPMDDLNDPASVAILNHLDSSLVLSREIFAEGLFPAIDPLLSNSSLLQEKIVGKRHILLVKRVKKILHKYKQLEEMIMILGVQELEPNNRLIVKKAQQLKNYFSQNLFMASSYTKKPGFFADKEEMLDEIEKIVDGHYIDIPEYKFLYLGSSKKLDQIKANLEKDQKEQEN.

145–152 serves as a coordination point for ATP; sequence GGAGVGKT.

The protein belongs to the ATPase alpha/beta chains family. F-type ATPases have 2 components, CF(1) - the catalytic core - and CF(0) - the membrane proton channel. CF(1) has five subunits: alpha(3), beta(3), gamma(1), delta(1), epsilon(1). CF(0) has three main subunits: a(1), b(2) and c(9-12). The alpha and beta chains form an alternating ring which encloses part of the gamma chain. CF(1) is attached to CF(0) by a central stalk formed by the gamma and epsilon chains, while a peripheral stalk is formed by the delta and b chains.

Its subcellular location is the cell membrane. The catalysed reaction is ATP + H2O + 4 H(+)(in) = ADP + phosphate + 5 H(+)(out). In terms of biological role, produces ATP from ADP in the presence of a proton gradient across the membrane. The catalytic sites are hosted primarily by the beta subunits. The protein is ATP synthase subunit beta 2 of Mycoplasmopsis pulmonis (strain UAB CTIP) (Mycoplasma pulmonis).